The primary structure comprises 928 residues: Protein naked cuticle (928 aa).

A compositionally biased stretch (polar residues) spans 68 to 80 (IITTPPGNASGAG). A disordered region spans residues 68-133 (IITTPPGNAS…SNGKHGKYSN (66 aa)). A compositionally biased stretch (basic residues) spans 84–101 (QSHHQTNHHSSGRSHPGH). Residues 120-133 (ISSTSNGKHGKYSN) are compositionally biased toward polar residues. The segment at 177 to 253 (EFTCDVSVEG…TVSPEGKSKS (77 aa)) is interaction with dsh. Residues 188 to 224 (KSSQPLQFSFTFYDLDGHHGKITKDDIVGIVYTIYES) enclose the EF-hand domain. The segment at 227-372 (KSVVVPHCGS…ARYHQKNNSR (146 aa)) is important for binding to zinc. Disordered regions lie at residues 291–368 (GVGS…YHQK), 462–543 (VGND…KSAE), 578–600 (NVSPIRQPAAQQQPQQQQRQRCN), 614–668 (PVAQ…HPQP), and 779–825 (LQQK…GSKI). A compositionally biased stretch (basic residues) spans 307–317 (RRQHRYRPRKL). Phosphoserine occurs at positions 320, 327, and 329. Basic residues predominate over residues 353–368 (GKSHHHQSQSARYHQK). Residues 484 to 493 (QPQSLNHKSA) show a composition bias toward polar residues. A compositionally biased stretch (low complexity) spans 525–538 (HQHQQQNQQQQQQQ). The tract at residues 543–572 (ECWKSALNRNDLISIIRESMEKNRLCFQLN) is required for nuclear localization and inhibition of Wnt signaling. Composition is skewed to low complexity over residues 583 to 598 (RQPAAQQQPQQQQRQR) and 624 to 649 (SPPTAEPTTPSIPAAPPAIEVNGQQH). The span at 650–663 (HPTHPTHPSHHNHH) shows a compositional bias: basic residues. A compositionally biased stretch (basic and acidic residues) spans 802–811 (QPKDASRSEQ). Residues 812-822 (RPPTSNSSSAG) show a composition bias toward polar residues.

This sequence belongs to the NKD family. Interacts with dsh. This interaction may be stabilized by zinc.

It is found in the cell membrane. The protein resides in the cytoplasm. It localises to the nucleus. Cell autonomous antagonist of the canonical Wnt signaling pathway. May activate a second Wnt signaling pathway that controls planar cell polarity. Required for neuroblast specification. The sequence is that of Protein naked cuticle (nkd) from Drosophila melanogaster (Fruit fly).